A 911-amino-acid chain; its full sequence is Pesticidal crystal protein Cry1Af (911 aa).

Belongs to the delta endotoxin family.

Its function is as follows. Promotes colloidosmotic lysis by binding to the midgut epithelial cells of both dipteran and lepidopteran larvae. The polypeptide is Pesticidal crystal protein Cry1Af (cry1Af) (Bacillus thuringiensis).